Here is a 505-residue protein sequence, read N- to C-terminus: RNA-splicing ligase RtcB homolog (505 aa).

Residues Asp-119, Cys-122, His-227, His-259, and His-353 each contribute to the Mn(2+) site. A GMP-binding site is contributed by 226–230 (NHYGE). Residues 353–354 (HN), 402–405 (GGTM), Ser-409, 428–431 (HGAG), and Lys-504 each bind GMP. His-428 (GMP-histidine intermediate) is an active-site residue.

Belongs to the RtcB family. As to quaternary structure, catalytic component of the tRNA-splicing ligase complex. Mn(2+) is required as a cofactor.

The catalysed reaction is a 3'-end 3'-phospho-ribonucleotide-RNA + a 5'-end dephospho-ribonucleoside-RNA + GTP = a ribonucleotidyl-ribonucleotide-RNA + GMP + diphosphate. It catalyses the reaction a 3'-end 2',3'-cyclophospho-ribonucleotide-RNA + a 5'-end dephospho-ribonucleoside-RNA + GTP + H2O = a ribonucleotidyl-ribonucleotide-RNA + GMP + diphosphate + H(+). Its function is as follows. Catalytic subunit of the tRNA-splicing ligase complex that acts by directly joining spliced tRNA halves to mature-sized tRNAs by incorporating the precursor-derived splice junction phosphate into the mature tRNA as a canonical 3',5'-phosphodiester. May act as an RNA ligase with broad substrate specificity, and may function toward other RNAs. The chain is RNA-splicing ligase RtcB homolog from Brugia malayi (Filarial nematode worm).